The sequence spans 605 residues: UvrABC system protein C (605 aa).

Residues Gln14–Ile92 form the GIY-YIG domain. Positions Lys202–Ile237 constitute a UVR domain.

It belongs to the UvrC family. Interacts with UvrB in an incision complex.

It is found in the cytoplasm. Functionally, the UvrABC repair system catalyzes the recognition and processing of DNA lesions. UvrC both incises the 5' and 3' sides of the lesion. The N-terminal half is responsible for the 3' incision and the C-terminal half is responsible for the 5' incision. This is UvrABC system protein C from Wolbachia sp. subsp. Drosophila simulans (strain wRi).